A 364-amino-acid chain; its full sequence is MSTDGNNNKKGSKEGPKSSEISKFDLAKENPKLAEWMDDCIKRMNSLYKDTNINICNVMTGHEIISIIRMVEAIFMEESNLCEAEAPIKVIGDIHAQYQDMNRLFDLIGRVPEEKLMFLGDYVDRGPQGIEVLILLFCLKIRYRDRIYLLRGNHETPSVNKIYGFYVECQYKYGIGLWWDFQSCFNRMPMSGLISKRVLCMHGGLSPELINLDTIRNIPRPCEPLDRGLLIDLLWSDPTNKGEGWFHSIRGISYMFGKGVVEQACKSLEIDLIIRAHQVVQDGYEMMTGRRLITVFSVPNYCAQFTNAAAVVCLNANLQISFQQMIPPPLPEGTKAKAAPAIAIDPNIDAARADKDAIKPFVKE.

Residues 1–24 (MSTDGNNNKKGSKEGPKSSEISKF) are disordered. The span at 11-24 (GSKEGPKSSEISKF) shows a compositional bias: basic and acidic residues. 4 residues coordinate Mn(2+): D93, H95, D121, and N153. The active-site Proton donor is the H154. Mn(2+)-binding residues include H202 and H277.

Belongs to the PPP phosphatase family. PP-1 subfamily. It depends on Mn(2+) as a cofactor.

The catalysed reaction is O-phospho-L-seryl-[protein] + H2O = L-seryl-[protein] + phosphate. It catalyses the reaction O-phospho-L-threonyl-[protein] + H2O = L-threonyl-[protein] + phosphate. The polypeptide is Putative serine/threonine-protein phosphatase C06A1.3 (Caenorhabditis elegans).